Consider the following 398-residue polypeptide: tRNA-specific 2-thiouridylase MnmA (398 aa).

ATP is bound by residues 18–25 (AMSGGVDS) and leucine 44. The active-site Nucleophile is the cysteine 112. The cysteines at positions 112 and 213 are disulfide-linked. Glycine 136 contacts ATP. Positions 163–165 (RDQ) are interaction with tRNA. The active-site Cysteine persulfide intermediate is the cysteine 213.

The protein belongs to the MnmA/TRMU family.

The protein resides in the cytoplasm. The catalysed reaction is S-sulfanyl-L-cysteinyl-[protein] + uridine(34) in tRNA + AH2 + ATP = 2-thiouridine(34) in tRNA + L-cysteinyl-[protein] + A + AMP + diphosphate + H(+). Functionally, catalyzes the 2-thiolation of uridine at the wobble position (U34) of tRNA, leading to the formation of s(2)U34. The protein is tRNA-specific 2-thiouridylase MnmA of Rhizobium meliloti (strain 1021) (Ensifer meliloti).